A 928-amino-acid chain; its full sequence is DNA mismatch repair protein MutS (928 aa).

613–620 (GPNMAGKS) contacts ATP. The segment covering 854-872 (KAKSNKDDHRIDEKTENSS) has biased composition (basic and acidic residues). Residues 854–880 (KAKSNKDDHRIDEKTENSSKKHKNKDS) form a disordered region.

The protein belongs to the DNA mismatch repair MutS family.

This protein is involved in the repair of mismatches in DNA. It is possible that it carries out the mismatch recognition step. This protein has a weak ATPase activity. The polypeptide is DNA mismatch repair protein MutS (Clostridium beijerinckii (strain ATCC 51743 / NCIMB 8052) (Clostridium acetobutylicum)).